A 184-amino-acid chain; its full sequence is Der GTPase-activating protein YihI (184 aa).

The tract at residues 1–107 (MNRPVKGAAD…VVAAKPTMSP (107 aa)) is disordered. The span at 21–32 (TREELEREARER) shows a compositional bias: basic and acidic residues. A compositionally biased stretch (low complexity) spans 80 to 95 (SAVAKPKPKSKPSAPV).

It belongs to the YihI family. As to quaternary structure, interacts with Der.

A GTPase-activating protein (GAP) that modifies Der/EngA GTPase function. May play a role in ribosome biogenesis. The chain is Der GTPase-activating protein YihI from Pectobacterium carotovorum subsp. carotovorum (strain PC1).